Consider the following 619-residue polypeptide: 2-succinyl-5-enolpyruvyl-6-hydroxy-3-cyclohexene-1-carboxylate synthase (619 aa).

Positions 385 to 398 (SSAHQSLAATNSDS) are enriched in polar residues. Residues 385-415 (SSAHQSLAATNSDSSTDDIIENTDEEGSNES) form a disordered region. Over residues 399-413 (STDDIIENTDEEGSN) the composition is skewed to acidic residues.

This sequence belongs to the TPP enzyme family. MenD subfamily. As to quaternary structure, homodimer. Mg(2+) is required as a cofactor. Requires Mn(2+) as cofactor. The cofactor is thiamine diphosphate.

It catalyses the reaction isochorismate + 2-oxoglutarate + H(+) = 5-enolpyruvoyl-6-hydroxy-2-succinyl-cyclohex-3-ene-1-carboxylate + CO2. The protein operates within quinol/quinone metabolism; 1,4-dihydroxy-2-naphthoate biosynthesis; 1,4-dihydroxy-2-naphthoate from chorismate: step 2/7. It participates in quinol/quinone metabolism; menaquinone biosynthesis. Catalyzes the thiamine diphosphate-dependent decarboxylation of 2-oxoglutarate and the subsequent addition of the resulting succinic semialdehyde-thiamine pyrophosphate anion to isochorismate to yield 2-succinyl-5-enolpyruvyl-6-hydroxy-3-cyclohexene-1-carboxylate (SEPHCHC). The chain is 2-succinyl-5-enolpyruvyl-6-hydroxy-3-cyclohexene-1-carboxylate synthase from Haloquadratum walsbyi (strain DSM 16790 / HBSQ001).